A 107-amino-acid chain; its full sequence is Thiosulfate sulfurtransferase GlpE (107 aa).

Residues Q19–K107 enclose the Rhodanese domain. C67 functions as the Cysteine persulfide intermediate in the catalytic mechanism.

This sequence belongs to the GlpE family.

It is found in the cytoplasm. The catalysed reaction is thiosulfate + hydrogen cyanide = thiocyanate + sulfite + 2 H(+). The enzyme catalyses thiosulfate + [thioredoxin]-dithiol = [thioredoxin]-disulfide + hydrogen sulfide + sulfite + 2 H(+). Its function is as follows. Transferase that catalyzes the transfer of sulfur from thiosulfate to thiophilic acceptors such as cyanide or dithiols. May function in a CysM-independent thiosulfate assimilation pathway by catalyzing the conversion of thiosulfate to sulfite, which can then be used for L-cysteine biosynthesis. This is Thiosulfate sulfurtransferase GlpE from Aliivibrio fischeri (strain ATCC 700601 / ES114) (Vibrio fischeri).